A 260-amino-acid chain; its full sequence is Flap endonuclease Xni (260 aa).

Residue Asp109 participates in Mg(2+) binding. The 5'-3' exonuclease domain occupies 165–259 (VKPSQLADYW…DIRFTGPNKA (95 aa)). Positions 176, 185, 187, and 190 each coordinate K(+). Positions 189 to 194 (GVGPKA) are interaction with DNA.

This sequence belongs to the Xni family. Requires Mg(2+) as cofactor. K(+) serves as cofactor.

Its function is as follows. Has flap endonuclease activity. During DNA replication, flap endonucleases cleave the 5'-overhanging flap structure that is generated by displacement synthesis when DNA polymerase encounters the 5'-end of a downstream Okazaki fragment. This Vibrio campbellii (strain ATCC BAA-1116) protein is Flap endonuclease Xni.